Consider the following 132-residue polypeptide: Small ribosomal subunit protein uS8 (132 aa).

The protein belongs to the universal ribosomal protein uS8 family. As to quaternary structure, part of the 30S ribosomal subunit. Contacts proteins S5 and S12.

In terms of biological role, one of the primary rRNA binding proteins, it binds directly to 16S rRNA central domain where it helps coordinate assembly of the platform of the 30S subunit. In Acetivibrio thermocellus (strain ATCC 27405 / DSM 1237 / JCM 9322 / NBRC 103400 / NCIMB 10682 / NRRL B-4536 / VPI 7372) (Clostridium thermocellum), this protein is Small ribosomal subunit protein uS8.